We begin with the raw amino-acid sequence, 251 residues long: Triosephosphate isomerase (251 aa).

9–11 lines the substrate pocket; sequence NWK. Residue His-96 is the Electrophile of the active site. Residue Glu-167 is the Proton acceptor of the active site. Substrate-binding positions include Gly-173, Ser-213, and 234–235; that span reads GG.

The protein belongs to the triosephosphate isomerase family. In terms of assembly, homodimer.

The protein resides in the cytoplasm. The enzyme catalyses D-glyceraldehyde 3-phosphate = dihydroxyacetone phosphate. Its pathway is carbohydrate biosynthesis; gluconeogenesis. The protein operates within carbohydrate degradation; glycolysis; D-glyceraldehyde 3-phosphate from glycerone phosphate: step 1/1. Functionally, involved in the gluconeogenesis. Catalyzes stereospecifically the conversion of dihydroxyacetone phosphate (DHAP) to D-glyceraldehyde-3-phosphate (G3P). The polypeptide is Triosephosphate isomerase (Phocaeicola vulgatus (strain ATCC 8482 / DSM 1447 / JCM 5826 / CCUG 4940 / NBRC 14291 / NCTC 11154) (Bacteroides vulgatus)).